Here is a 140-residue protein sequence, read N- to C-terminus: MSITTHLDIVSAEHEIFSGVVEMVVATGELGEIGITPGHAPLLTVLRPGEVRITLQGGTQDIYYVQGGMLEVQPHCVTILADVAERAEHLDEAAALAAKAKAEAAIASKGGDIDYSVAAAELARAVAQIRAIQKTRKKMK.

This sequence belongs to the ATPase epsilon chain family. In terms of assembly, F-type ATPases have 2 components, CF(1) - the catalytic core - and CF(0) - the membrane proton channel. CF(1) has five subunits: alpha(3), beta(3), gamma(1), delta(1), epsilon(1). CF(0) has three main subunits: a, b and c.

The protein resides in the cell inner membrane. Produces ATP from ADP in the presence of a proton gradient across the membrane. The chain is ATP synthase epsilon chain from Legionella pneumophila (strain Paris).